Consider the following 264-residue polypeptide: GTP cyclohydrolase FolE2 (264 aa).

It belongs to the GTP cyclohydrolase IV family.

It catalyses the reaction GTP + H2O = 7,8-dihydroneopterin 3'-triphosphate + formate + H(+). Its pathway is cofactor biosynthesis; 7,8-dihydroneopterin triphosphate biosynthesis; 7,8-dihydroneopterin triphosphate from GTP: step 1/1. In terms of biological role, converts GTP to 7,8-dihydroneopterin triphosphate. The protein is GTP cyclohydrolase FolE2 of Ruthia magnifica subsp. Calyptogena magnifica.